The sequence spans 255 residues: tRNA-cytidine(32) 2-sulfurtransferase (255 aa).

Residues 37 to 42 carry the PP-loop motif motif; that stretch reads SGGKDS. The [4Fe-4S] cluster site is built by Cys112, Cys115, and Cys202.

This sequence belongs to the TtcA family. As to quaternary structure, homodimer. The cofactor is Mg(2+). Requires [4Fe-4S] cluster as cofactor.

The protein resides in the cytoplasm. It carries out the reaction cytidine(32) in tRNA + S-sulfanyl-L-cysteinyl-[cysteine desulfurase] + AH2 + ATP = 2-thiocytidine(32) in tRNA + L-cysteinyl-[cysteine desulfurase] + A + AMP + diphosphate + H(+). The protein operates within tRNA modification. Functionally, catalyzes the ATP-dependent 2-thiolation of cytidine in position 32 of tRNA, to form 2-thiocytidine (s(2)C32). The sulfur atoms are provided by the cysteine/cysteine desulfurase (IscS) system. This is tRNA-cytidine(32) 2-sulfurtransferase from Citrifermentans bemidjiense (strain ATCC BAA-1014 / DSM 16622 / JCM 12645 / Bem) (Geobacter bemidjiensis).